Consider the following 208-residue polypeptide: Small ribosomal subunit protein uS4 (208 aa).

The region spanning 98–161 (RRLDNVVYRL…RKSKRFKEVF (64 aa)) is the S4 RNA-binding domain.

Belongs to the universal ribosomal protein uS4 family. As to quaternary structure, part of the 30S ribosomal subunit. Contacts protein S5. The interaction surface between S4 and S5 is involved in control of translational fidelity.

In terms of biological role, one of the primary rRNA binding proteins, it binds directly to 16S rRNA where it nucleates assembly of the body of the 30S subunit. With S5 and S12 plays an important role in translational accuracy. The polypeptide is Small ribosomal subunit protein uS4 (Halothermothrix orenii (strain H 168 / OCM 544 / DSM 9562)).